Reading from the N-terminus, the 119-residue chain is Putative membrane protein insertion efficiency factor (119 aa).

The segment at 82-119 (NALRGEKGGESAADVPSGGSVSEPPGPAAETSPNAQGA) is disordered.

It belongs to the UPF0161 family.

Its subcellular location is the cell membrane. In terms of biological role, could be involved in insertion of integral membrane proteins into the membrane. The chain is Putative membrane protein insertion efficiency factor from Streptomyces griseus subsp. griseus (strain JCM 4626 / CBS 651.72 / NBRC 13350 / KCC S-0626 / ISP 5235).